Reading from the N-terminus, the 565-residue chain is Ubiquitin carboxyl-terminal hydrolase 21 (565 aa).

The segment covering 1 to 14 (MPQASEHRLGRTRE) has biased composition (basic and acidic residues). The segment at 1 to 103 (MPQASEHRLG…PPPTVALPLP (103 aa)) is disordered. The span at 48–57 (MLRPLPPRPG) shows a compositional bias: pro residues. Over residues 58 to 70 (LPDERLKKLELGR) the composition is skewed to basic and acidic residues. Positions 134–152 (ELGAALSRLALRPEPPTLR) match the Nuclear export signal motif. In terms of domain architecture, USP spans 212-558 (VGLRNLGNTC…EGYVLFYQLM (347 aa)). Cysteine 221 (nucleophile) is an active-site residue. 4 residues coordinate Zn(2+): cysteine 384, cysteine 387, cysteine 437, and cysteine 440. Histidine 518 functions as the Proton acceptor in the catalytic mechanism.

Belongs to the peptidase C19 family. USP21 subfamily. Interacts with BEND3. Highly expressed in heart, pancreas and skeletal muscle. Also expressed in brain, placenta, liver and kidney, and at very low level in lung.

It is found in the cytoplasm. Its subcellular location is the nucleus. The enzyme catalyses Thiol-dependent hydrolysis of ester, thioester, amide, peptide and isopeptide bonds formed by the C-terminal Gly of ubiquitin (a 76-residue protein attached to proteins as an intracellular targeting signal).. Its function is as follows. Deubiquitinates histone H2A, a specific tag for epigenetic transcriptional repression, thereby acting as a coactivator. Deubiquitination of histone H2A releaves the repression of di- and trimethylation of histone H3 at 'Lys-4', resulting in regulation of transcriptional initiation. Regulates gene expression via histone H2A deubiquitination. Deubiquitinates BAZ2A/TIP5 leading to its stabilization. Also capable of removing NEDD8 from NEDD8 conjugates but has no effect on Sentrin-1 conjugates. Also acts as a negative regulator of the ribosome quality control (RQC) by mediating deubiquitination of 40S ribosomal proteins RPS10/eS10 and RPS20/uS10, thereby antagonizing ZNF598-mediated 40S ubiquitination. This chain is Ubiquitin carboxyl-terminal hydrolase 21, found in Homo sapiens (Human).